Reading from the N-terminus, the 199-residue chain is Holliday junction branch migration complex subunit RuvA (199 aa).

The tract at residues Met-1–Ala-64 is domain I. The tract at residues Arg-65–Pro-143 is domain II. The interval Ala-144–Ser-146 is flexible linker. A domain III region spans residues Ala-147–Lys-199.

The protein belongs to the RuvA family. As to quaternary structure, homotetramer. Forms an RuvA(8)-RuvB(12)-Holliday junction (HJ) complex. HJ DNA is sandwiched between 2 RuvA tetramers; dsDNA enters through RuvA and exits via RuvB. An RuvB hexamer assembles on each DNA strand where it exits the tetramer. Each RuvB hexamer is contacted by two RuvA subunits (via domain III) on 2 adjacent RuvB subunits; this complex drives branch migration. In the full resolvosome a probable DNA-RuvA(4)-RuvB(12)-RuvC(2) complex forms which resolves the HJ.

It localises to the cytoplasm. Functionally, the RuvA-RuvB-RuvC complex processes Holliday junction (HJ) DNA during genetic recombination and DNA repair, while the RuvA-RuvB complex plays an important role in the rescue of blocked DNA replication forks via replication fork reversal (RFR). RuvA specifically binds to HJ cruciform DNA, conferring on it an open structure. The RuvB hexamer acts as an ATP-dependent pump, pulling dsDNA into and through the RuvAB complex. HJ branch migration allows RuvC to scan DNA until it finds its consensus sequence, where it cleaves and resolves the cruciform DNA. In Sphingopyxis alaskensis (strain DSM 13593 / LMG 18877 / RB2256) (Sphingomonas alaskensis), this protein is Holliday junction branch migration complex subunit RuvA.